A 324-amino-acid polypeptide reads, in one-letter code: Methionyl-tRNA formyltransferase (324 aa).

Residue 109–112 (SILP) coordinates (6S)-5,6,7,8-tetrahydrofolate.

Belongs to the Fmt family.

The enzyme catalyses L-methionyl-tRNA(fMet) + (6R)-10-formyltetrahydrofolate = N-formyl-L-methionyl-tRNA(fMet) + (6S)-5,6,7,8-tetrahydrofolate + H(+). Attaches a formyl group to the free amino group of methionyl-tRNA(fMet). The formyl group appears to play a dual role in the initiator identity of N-formylmethionyl-tRNA by promoting its recognition by IF2 and preventing the misappropriation of this tRNA by the elongation apparatus. In Acidothermus cellulolyticus (strain ATCC 43068 / DSM 8971 / 11B), this protein is Methionyl-tRNA formyltransferase.